We begin with the raw amino-acid sequence, 132 residues long: Small ribosomal subunit protein uS8 (132 aa).

Belongs to the universal ribosomal protein uS8 family. As to quaternary structure, part of the 30S ribosomal subunit. Contacts proteins S5 and S12.

Functionally, one of the primary rRNA binding proteins, it binds directly to 16S rRNA central domain where it helps coordinate assembly of the platform of the 30S subunit. The sequence is that of Small ribosomal subunit protein uS8 from Methylocella silvestris (strain DSM 15510 / CIP 108128 / LMG 27833 / NCIMB 13906 / BL2).